The primary structure comprises 358 residues: S-adenosylmethionine:tRNA ribosyltransferase-isomerase (358 aa).

This sequence belongs to the QueA family. Monomer.

Its subcellular location is the cytoplasm. It carries out the reaction 7-aminomethyl-7-carbaguanosine(34) in tRNA + S-adenosyl-L-methionine = epoxyqueuosine(34) in tRNA + adenine + L-methionine + 2 H(+). Its pathway is tRNA modification; tRNA-queuosine biosynthesis. Transfers and isomerizes the ribose moiety from AdoMet to the 7-aminomethyl group of 7-deazaguanine (preQ1-tRNA) to give epoxyqueuosine (oQ-tRNA). In Desulfotalea psychrophila (strain LSv54 / DSM 12343), this protein is S-adenosylmethionine:tRNA ribosyltransferase-isomerase.